Here is a 391-residue protein sequence, read N- to C-terminus: 3-ketoacyl-CoA thiolase (391 aa).

Cys-95 functions as the Acyl-thioester intermediate in the catalytic mechanism. Residues His-347 and Cys-377 each act as proton acceptor in the active site.

Belongs to the thiolase-like superfamily. Thiolase family. Heterotetramer of two alpha chains (FadB) and two beta chains (FadA).

The protein resides in the cytoplasm. The enzyme catalyses an acyl-CoA + acetyl-CoA = a 3-oxoacyl-CoA + CoA. Its pathway is lipid metabolism; fatty acid beta-oxidation. Functionally, catalyzes the final step of fatty acid oxidation in which acetyl-CoA is released and the CoA ester of a fatty acid two carbons shorter is formed. This chain is 3-ketoacyl-CoA thiolase, found in Pseudomonas putida (strain ATCC 700007 / DSM 6899 / JCM 31910 / BCRC 17059 / LMG 24140 / F1).